The chain runs to 479 residues: Probable aspartic-type endopeptidase OPSB (479 aa).

An N-terminal signal peptide occupies residues 1 to 19 (MRGDSFIWSLTTAASLLYA). Positions 58–393 (SGKTVSQDLD…DLDNNEISIA (336 aa)) constitute a Peptidase A1 domain. N-linked (GlcNAc...) asparagine glycosylation occurs at asparagine 68. Aspartate 76 is a catalytic residue. Residue asparagine 121 is glycosylated (N-linked (GlcNAc...) asparagine). The active site involves aspartate 275. A glycan (N-linked (GlcNAc...) asparagine) is linked at asparagine 398. A disordered region spans residues 435–454 (LSGIETGVPGARPTSRGAAP). The GPI-anchor amidated glycine moiety is linked to residue glycine 451. The propeptide at 452 to 479 (AAPTMRPDVTFGVAAAGLAGAGILFAFM) is removed in mature form.

The protein belongs to the peptidase A1 family.

The protein localises to the cell membrane. In terms of biological role, probable GPI-anchored aspartic-type endopeptidase which contributes to virulence. This Arthroderma otae (strain ATCC MYA-4605 / CBS 113480) (Microsporum canis) protein is Probable aspartic-type endopeptidase OPSB (OPSB).